Here is a 192-residue protein sequence, read N- to C-terminus: Ras-like protein RAS2 (192 aa).

15–22 (GGGGVGKS) contributes to the GTP binding site. The short motif at 37 to 45 (YDPTIEDSY) is the Effector region element. GTP-binding positions include 62 to 66 (DTAGQ) and 121 to 124 (NKSD). C189 carries the post-translational modification Cysteine methyl ester. Residue C189 is the site of S-geranylgeranyl cysteine attachment. Residues 190–192 (IVL) constitute a propeptide, removed in mature form.

The protein belongs to the small GTPase superfamily. Ras family.

It localises to the cell membrane. It catalyses the reaction GTP + H2O = GDP + phosphate + H(+). With respect to regulation, alternates between an inactive form bound to GDP and an active form bound to GTP. Activated by a guanine nucleotide-exchange factor (GEF) and inactivated by a GTPase-activating protein (GAP). Ras proteins bind GDP/GTP and possess intrinsic GTPase activity. The protein is Ras-like protein RAS2 (RAS2) of Hydra vulgaris (Hydra).